A 337-amino-acid chain; its full sequence is DNA-directed RNA polymerase subunit alpha (337 aa).

An alpha N-terminal domain (alpha-NTD) region spans residues 1–233 (MIREKVTVST…DLFIPFLHME (233 aa)). The alpha C-terminal domain (alpha-CTD) stretch occupies residues 266-337 (KLALKSIFID…FAIDLPKNQF (72 aa)).

This sequence belongs to the RNA polymerase alpha chain family. In plastids the minimal PEP RNA polymerase catalytic core is composed of four subunits: alpha, beta, beta', and beta''. When a (nuclear-encoded) sigma factor is associated with the core the holoenzyme is formed, which can initiate transcription.

The protein resides in the plastid. It localises to the chloroplast. The enzyme catalyses RNA(n) + a ribonucleoside 5'-triphosphate = RNA(n+1) + diphosphate. Its function is as follows. DNA-dependent RNA polymerase catalyzes the transcription of DNA into RNA using the four ribonucleoside triphosphates as substrates. The protein is DNA-directed RNA polymerase subunit alpha of Ipomoea purpurea (Common morning glory).